Reading from the N-terminus, the 414-residue chain is 3-phosphoshikimate 1-carboxyvinyltransferase (414 aa).

3-phosphoshikimate is bound by residues K20, S21, and R25. Phosphoenolpyruvate is bound at residue K20. 2 residues coordinate phosphoenolpyruvate: G85 and R113. 3-phosphoshikimate contacts are provided by S154, S155, Q156, S181, D296, and K323. Q156 serves as a coordination point for phosphoenolpyruvate. Residue D296 is the Proton acceptor of the active site. Positions 327, 371, and 395 each coordinate phosphoenolpyruvate.

This sequence belongs to the EPSP synthase family. In terms of assembly, monomer.

It localises to the cytoplasm. It catalyses the reaction 3-phosphoshikimate + phosphoenolpyruvate = 5-O-(1-carboxyvinyl)-3-phosphoshikimate + phosphate. It participates in metabolic intermediate biosynthesis; chorismate biosynthesis. In terms of biological role, catalyzes the transfer of the enolpyruvyl moiety of phosphoenolpyruvate (PEP) to the 5-hydroxyl of shikimate-3-phosphate (S3P) to produce enolpyruvyl shikimate-3-phosphate and inorganic phosphate. The chain is 3-phosphoshikimate 1-carboxyvinyltransferase from Saccharolobus islandicus (strain M.14.25 / Kamchatka #1) (Sulfolobus islandicus).